A 1018-amino-acid chain; its full sequence is Thrombospondin type-1 domain-containing protein 4 (1018 aa).

The first 26 residues, 1–26 (MVSYLTSCLSALSTLLLLLGSQLVCP), serve as a signal peptide directing secretion. 3 disordered regions span residues 34–56 (KVPQ…SPGV), 116–240 (HRSQ…PSEA), and 534–623 (SPQV…NWKQ). The 254-residue stretch at 54–307 (PGVWGSWGPW…YKLCNTNACP (254 aa)) folds into the TSP type-1 1 domain. Basic residues predominate over residues 187 to 199 (QRLRRQRPSSRHS). The span at 216 to 230 (HQFSHSQPLYQSDSG) shows a compositional bias: polar residues. Composition is skewed to basic and acidic residues over residues 558-573 (QEDR…KEDS) and 592-603 (RHPERFPSHRPD). TSP type-1 domains lie at 676–737 (CPAF…KICS), 739–792 (WQIR…DMGP), 793–851 (CAKS…GPCT), 852–911 (GKVE…HLKP), and 912–968 (CGAK…QDCV). The region spanning 971-1008 (VDENCKDKYYNCNVVVQARLCVYNYYKTACCASCTRVA) is the PLAC domain.

Isoform 2 interacts with FBN1. Isoform 2 may interact with TGFB1. In terms of tissue distribution, both isoforms are expressed in the embryo from 7 dpc through 17. Isoform 1 is widely expressed in adult tissues. Isoform 2 is detected in brain, spinal cord, eye, kidney, stomach and uterus. Mainly observed in fibrillar extracellular matrices in elastic tissues (at protein level).

It is found in the secreted. The protein localises to the extracellular space. It localises to the extracellular matrix. Promotes FBN1 matrix assembly. Attenuates TGFB signaling, possibly by accelerating the sequestration of large latent complexes of TGFB or active TGFB by FBN1 microfibril assembly, thereby negatively regulating the expression of TGFB regulatory targets, such as POSTN. The polypeptide is Thrombospondin type-1 domain-containing protein 4 (Thsd4) (Mus musculus (Mouse)).